Reading from the N-terminus, the 298-residue chain is N-acetylmuramic acid 6-phosphate etherase (298 aa).

Residues alanine 55–lysine 218 enclose the SIS domain. Glutamate 83 functions as the Proton donor in the catalytic mechanism. Glutamate 114 is a catalytic residue.

This sequence belongs to the GCKR-like family. MurNAc-6-P etherase subfamily. In terms of assembly, homodimer.

The enzyme catalyses N-acetyl-D-muramate 6-phosphate + H2O = N-acetyl-D-glucosamine 6-phosphate + (R)-lactate. The protein operates within amino-sugar metabolism; N-acetylmuramate degradation. Its function is as follows. Specifically catalyzes the cleavage of the D-lactyl ether substituent of MurNAc 6-phosphate, producing GlcNAc 6-phosphate and D-lactate. The chain is N-acetylmuramic acid 6-phosphate etherase from Lactobacillus johnsonii (strain CNCM I-12250 / La1 / NCC 533).